A 440-amino-acid polypeptide reads, in one-letter code: Ribosomal protein uS12 methylthiotransferase RimO (440 aa).

One can recognise an MTTase N-terminal domain in the interval 8-125 (LRCHAISLGC…WNEQILLALN (118 aa)). Positions 17, 52, 87, 152, 156, and 159 each coordinate [4Fe-4S] cluster. The region spanning 138–368 (TTGKSYAWLK…MEIQLKISEK (231 aa)) is the Radical SAM core domain. The TRAM domain occupies 371–439 (KNFVGKRLSL…SYDLVALADS (69 aa)).

The protein belongs to the methylthiotransferase family. RimO subfamily. It depends on [4Fe-4S] cluster as a cofactor.

Its subcellular location is the cytoplasm. It carries out the reaction L-aspartate(89)-[ribosomal protein uS12]-hydrogen + (sulfur carrier)-SH + AH2 + 2 S-adenosyl-L-methionine = 3-methylsulfanyl-L-aspartate(89)-[ribosomal protein uS12]-hydrogen + (sulfur carrier)-H + 5'-deoxyadenosine + L-methionine + A + S-adenosyl-L-homocysteine + 2 H(+). Its function is as follows. Catalyzes the methylthiolation of an aspartic acid residue of ribosomal protein uS12. The protein is Ribosomal protein uS12 methylthiotransferase RimO of Lawsonia intracellularis (strain PHE/MN1-00).